Here is a 1398-residue protein sequence, read N- to C-terminus: DNA-directed RNA polymerase subunit beta' (1398 aa).

Zn(2+)-binding residues include Cys71, Cys73, Cys86, and Cys89. Mg(2+) is bound by residues Asp462, Asp464, and Asp466. Cys810, Cys884, Cys891, and Cys894 together coordinate Zn(2+).

Belongs to the RNA polymerase beta' chain family. The RNAP catalytic core consists of 2 alpha, 1 beta, 1 beta' and 1 omega subunit. When a sigma factor is associated with the core the holoenzyme is formed, which can initiate transcription. The cofactor is Mg(2+). It depends on Zn(2+) as a cofactor.

The enzyme catalyses RNA(n) + a ribonucleoside 5'-triphosphate = RNA(n+1) + diphosphate. DNA-dependent RNA polymerase catalyzes the transcription of DNA into RNA using the four ribonucleoside triphosphates as substrates. This chain is DNA-directed RNA polymerase subunit beta', found in Mesorhizobium japonicum (strain LMG 29417 / CECT 9101 / MAFF 303099) (Mesorhizobium loti (strain MAFF 303099)).